The chain runs to 326 residues: ATP synthase gamma chain (326 aa).

This sequence belongs to the ATPase gamma chain family. As to quaternary structure, F-type ATPases have 2 components, CF(1) - the catalytic core - and CF(0) - the membrane proton channel. CF(1) has five subunits: alpha(3), beta(3), gamma(1), delta(1), epsilon(1). CF(0) has three main subunits: a, b and c.

It localises to the cell membrane. Produces ATP from ADP in the presence of a proton gradient across the membrane. The gamma chain is believed to be important in regulating ATPase activity and the flow of protons through the CF(0) complex. In Rhodococcus opacus (strain B4), this protein is ATP synthase gamma chain.